We begin with the raw amino-acid sequence, 1148 residues long: Pyruvate carboxylase (1148 aa).

In terms of domain architecture, Biotin carboxylation spans 1 to 457; that stretch reads MSQQSIQKVL…DTSFIDTTPE (457 aa). Positions 121, 205, and 240 each coordinate ATP. One can recognise an ATP-grasp domain in the interval 125–321; sequence REQAEKAGIP…IVQTQILVAQ (197 aa). Residue K242 is part of the active site. The region spanning 534 to 802 is the Pyruvate carboxyltransferase domain; it reads VLLTDTTFRD…RPEMNVQGVE (269 aa). Substrate is bound by residues 542 to 546 and R615; that span reads RDAHQ. An a divalent metal cation-binding site is contributed by D543. A divalent metal cation is bound by residues K712, H741, and H743. An N6-carboxylysine modification is found at K712. Position 876 (T876) interacts with substrate. The region spanning 1071 to 1146 is the Biotinyl-binding domain; it reads KADRTNPSHI…QTGDLLLEIE (76 aa). At K1112 the chain carries N6-biotinyllysine.

As to quaternary structure, homotetramer. At very low potassium concentrations, when intracellular levels of c-di-AMP are low, interacts with apo-DarB. c-di-AMP inhibits the binding of DarB to PYC. Does not bind directly c-di-AMP. Biotin serves as cofactor.

It carries out the reaction hydrogencarbonate + pyruvate + ATP = oxaloacetate + ADP + phosphate + H(+). Activated by the cyclic di-AMP (c-di-AMP) receptor DarB in the absence of c-di-AMP. Allosterically activated by acetyl-CoA. Inhibited by the biotin-complexing protein avidin. In terms of biological role, catalyzes a 2-step reaction, involving the ATP-dependent carboxylation of the covalently attached biotin in the first step and the transfer of the carboxyl group to pyruvate in the second, leading to oxaloacetate production. Fulfills an anaplerotic function in B.subtilis as it is necessary for growth on glucose, but is not required for sporulation. The sequence is that of Pyruvate carboxylase (pyc) from Bacillus subtilis (strain 168).